Here is a 317-residue protein sequence, read N- to C-terminus: Porphobilinogen deaminase (317 aa).

An S-(dipyrrolylmethanemethyl)cysteine modification is found at Cys-245.

The protein belongs to the HMBS family. As to quaternary structure, monomer. Dipyrromethane is required as a cofactor.

The catalysed reaction is 4 porphobilinogen + H2O = hydroxymethylbilane + 4 NH4(+). Its pathway is porphyrin-containing compound metabolism; protoporphyrin-IX biosynthesis; coproporphyrinogen-III from 5-aminolevulinate: step 2/4. It functions in the pathway porphyrin-containing compound metabolism; chlorophyll biosynthesis. In terms of biological role, tetrapolymerization of the monopyrrole PBG into the hydroxymethylbilane pre-uroporphyrinogen in several discrete steps. The chain is Porphobilinogen deaminase from Parasynechococcus marenigrum (strain WH8102).